The chain runs to 511 residues: Probable cytosol aminopeptidase (511 aa).

Residues lysine 255 and aspartate 260 each coordinate Mn(2+). Lysine 267 is a catalytic residue. Residues aspartate 278, aspartate 337, and glutamate 339 each contribute to the Mn(2+) site. The active site involves arginine 341. Residues 485 to 511 are disordered; it reads GAAQAVSPKKAARKEPGAAARKARSAQ.

Belongs to the peptidase M17 family. Mn(2+) serves as cofactor.

Its subcellular location is the cytoplasm. The enzyme catalyses Release of an N-terminal amino acid, Xaa-|-Yaa-, in which Xaa is preferably Leu, but may be other amino acids including Pro although not Arg or Lys, and Yaa may be Pro. Amino acid amides and methyl esters are also readily hydrolyzed, but rates on arylamides are exceedingly low.. It carries out the reaction Release of an N-terminal amino acid, preferentially leucine, but not glutamic or aspartic acids.. Its function is as follows. Presumably involved in the processing and regular turnover of intracellular proteins. Catalyzes the removal of unsubstituted N-terminal amino acids from various peptides. The polypeptide is Probable cytosol aminopeptidase (Variovorax paradoxus (strain S110)).